Consider the following 539-residue polypeptide: Chitin deacetylase 1 (539 aa).

Positions methionine 1–glycine 23 are cleaved as a signal peptide. One can recognise a Chitin-binding type-2 domain in the interval glutamine 42–leucine 104. 6 cysteine pairs are disulfide-bonded: cysteine 80–cysteine 93, cysteine 122–cysteine 134, cysteine 129–cysteine 147, cysteine 141–cysteine 156, cysteine 168–cysteine 180, and cysteine 173–cysteine 178. Residues leucine 121–aspartate 157 form the LDL-receptor class A domain. Residue aspartate 206 participates in Zn(2+) binding. Intrachain disulfides connect cysteine 230-cysteine 489, cysteine 354-cysteine 361, cysteine 391-cysteine 397, cysteine 497-cysteine 520, and cysteine 503-cysteine 523. The N-linked (GlcNAc...) asparagine glycan is linked to asparagine 244. Residues histidine 261 and histidine 265 each coordinate Zn(2+). N-linked (GlcNAc...) asparagine glycosylation is present at asparagine 296.

This sequence belongs to the carbohydrate esterase 4 (CE4) family. As to quaternary structure, interacts with CPAP3-A1. The cofactor is Zn(2+). As to expression, highly expressed in epidermis and head. Moderate expression levels in fat body, Malpighian tubule, testis and midgut. Low expression in silk gland and ovary.

Its subcellular location is the secreted. The catalysed reaction is [(1-&gt;4)-N-acetyl-beta-D-glucosaminyl](n) + n H2O = chitosan + n acetate. With respect to regulation, binding to the accessory protein CPAP3-A1 is essential for chitinase activity. Hydrolyzes the N-acetamido groups of N-acetyl-D-glucosamine residues in chitin. The polypeptide is Chitin deacetylase 1 (Bombyx mori (Silk moth)).